A 361-amino-acid chain; its full sequence is Arginine N(omega)-methyltransferase (361 aa).

Residues 1–17 (MRHVQEARAVPAEHEAR) are compositionally biased toward basic and acidic residues. Residues 1–24 (MRHVQEARAVPAEHEARPAPVTMP) are disordered. Positions 65-361 (DADAFAQIAR…WSDFTLRVSI (297 aa)) constitute an SAM-dependent MTase PRMT-type domain.

It belongs to the class I-like SAM-binding methyltransferase superfamily. Protein arginine N-methyltransferase family.

It carries out the reaction L-arginine + S-adenosyl-L-methionine = N(omega)-methyl-L-arginine + S-adenosyl-L-homocysteine + H(+). It functions in the pathway antibiotic biosynthesis. Involved in the biosynthesis of the glucosamine-nitrosourea antibiotic streptozotocin (SZN). Catalyzes the conversion of L-arginine to N(omega)-methyl-L-arginine (L-NMA), using S-adenosyl-L-methionine (SAM) as a methyl donor. The sequence is that of Arginine N(omega)-methyltransferase from Streptomyces achromogenes subsp. streptozoticus.